Reading from the N-terminus, the 358-residue chain is Methylthioribose-1-phosphate isomerase (358 aa).

Residues 54–56, R96, and Q205 contribute to the substrate site; that span reads RGA. The active-site Proton donor is D246. 256–257 lines the substrate pocket; the sequence is NK.

The protein belongs to the eIF-2B alpha/beta/delta subunits family. MtnA subfamily.

It carries out the reaction 5-(methylsulfanyl)-alpha-D-ribose 1-phosphate = 5-(methylsulfanyl)-D-ribulose 1-phosphate. It functions in the pathway amino-acid biosynthesis; L-methionine biosynthesis via salvage pathway; L-methionine from S-methyl-5-thio-alpha-D-ribose 1-phosphate: step 1/6. In terms of biological role, catalyzes the interconversion of methylthioribose-1-phosphate (MTR-1-P) into methylthioribulose-1-phosphate (MTRu-1-P). The sequence is that of Methylthioribose-1-phosphate isomerase from Pseudomonas fluorescens (strain Pf0-1).